The following is a 601-amino-acid chain: Serine/threonine-protein phosphatase 2A 65 kDa regulatory subunit A beta isoform (601 aa).

At Ala-2 the chain carries N-acetylalanine. HEAT repeat units follow at residues 20-58, 59-96, 97-135, 136-173, 174-212, 213-251, 252-290, 291-333, 334-372, 373-411, 412-450, 451-489, 490-528, 529-567, and 568-601; these read DSLYPIAVLIDELRNEDVQLRLNSIKKLSTIALALGVER, TRTELLPFLTDTIYDEDEVLLALAEQLGNFTGLVGGPD, FAHCLLPPLESLATVEETVVRDKAVESLRQISQEHTPVA, LEAHFVPLVKRLASGDWFTSRTSACGLFSVCYPRASNA, VKAEIRQHFRSLCSDDTPMVRRAAASKLGEFAKVLELDS, VKTEIVPLFTNLASDEQDSVRLLAVEACVSIAQLLSQED, LEALVMPTLRQAAEDKSWRVRYMVADKFSELQKAVGPKI, ALSD…RETV, IMNQILPYIKELVSDTNQHVKSALASVIMGLSTVLGKEN, TIEHLLPLFLAQLKDECPEVRLNIISNLDCVNEVIGIRQ, LSQSLLPAIVELAEDAKWRVRLAIIEYMPLLAGQLGVEF, FDEKLNSLCMAWLVDHVYAIREAATNNLMKLVQKFGTEW, AQNTIVPKVLVMANDPNYLHRMTTLFCINALSEACGKEI, TTKQMLPIVLKMAGDQVANVRFNVAKSLQKIGPILDTNA, and LQGEVKPVLQKLGQDEDMDVKYFAQEAISVLALA.

The protein belongs to the phosphatase 2A regulatory subunit A family. As to quaternary structure, PP2A consists of a common heterodimeric core enzyme, composed of a 36 kDa catalytic subunit (subunit C) and a 65 kDa constant regulatory subunit (PR65 or subunit A), that associates with a variety of regulatory subunits. Proteins that associate with the core dimer include three families of regulatory subunits B (the R2/B/PR55/B55, R3/B''/PR72/PR130/PR59 and R5/B'/B56 families), the 48 kDa variable regulatory subunit, viral proteins, and cell signaling molecules. Interacts with IPO9. Interacts with SGO1. Interacts with RAF1.

Functionally, the PR65 subunit of protein phosphatase 2A serves as a scaffolding molecule to coordinate the assembly of the catalytic subunit and a variable regulatory B subunit. The polypeptide is Serine/threonine-protein phosphatase 2A 65 kDa regulatory subunit A beta isoform (Ppp2r1b) (Mus musculus (Mouse)).